The following is a 267-amino-acid chain: Phosphonates import ATP-binding protein PhnC 1 (267 aa).

The ABC transporter domain maps to 3 to 247; it reads LSLDGVDLVH…ALDALYANEQ (245 aa). An ATP-binding site is contributed by 36–43; sequence GPSGAGKT.

The protein belongs to the ABC transporter superfamily. Phosphonates importer (TC 3.A.1.9.1) family. As to quaternary structure, the complex is composed of two ATP-binding proteins (PhnC), two transmembrane proteins (PhnE) and a solute-binding protein (PhnD).

It localises to the cell inner membrane. It catalyses the reaction phosphonate(out) + ATP + H2O = phosphonate(in) + ADP + phosphate + H(+). Functionally, part of the ABC transporter complex PhnCDE involved in phosphonates import. Responsible for energy coupling to the transport system. In Pseudomonas aeruginosa (strain ATCC 15692 / DSM 22644 / CIP 104116 / JCM 14847 / LMG 12228 / 1C / PRS 101 / PAO1), this protein is Phosphonates import ATP-binding protein PhnC 1.